The chain runs to 526 residues: MTKLSLLPLLTLASAVLAKQDAFQAKCASFGRKIKLPNVHVNFVEYVPGGTNLTLPDNDVTCGASSQVVSADMCRVAMAVDTSKSSQITLEAWFPREYTGRFLSTGNGGLSGCIQYYDLAYTAGLGFATVGANNGHNGTSGKPFYQHPEVIEDFAYRSIHTGVVVGKQLTKMFYKEGFDKSYYLGCSTGGRQGFKSIQKYPNDFDGVVAGAPAFNFVNLISWSIHFYSITGSNTSDTYLSPESWKVVHDEIVRQCDEIDGAKDGIIEDTDLCQPVIETIICKPGASDKTNCITGAQAKTVRNVLSPFYGVNGNLLYPRMQPGSELFASSVVYNGQPFRYSTDWYRYVVYNNPDWDATKWTVEDAAVALAQNPYNIQTWDADISSFQKAGGKVLTYHGMQDQLISSDNSKLYYARVAEEMGLGPEELDDFYRFFPVSGMAHCTGGDGAYGIGNGLRTYNGAEPENNVLMAMVQWVEKGIAPEFIRGAKFSNGVGSSVEYTRKHCRYPRRNVYKGPGNYSDENAWECV.

Positions 1–18 (MTKLSLLPLLTLASAVLA) are cleaved as a signal peptide. 2 disulfides stabilise this stretch: cysteine 27/cysteine 74 and cysteine 62/cysteine 113. Asparagine 52 is a glycosylation site (N-linked (GlcNAc...) asparagine). The N-linked (GlcNAc...) asparagine glycan is linked to asparagine 137. 4 cysteine pairs are disulfide-bonded: cysteine 186–cysteine 441, cysteine 255–cysteine 272, cysteine 281–cysteine 291, and cysteine 503–cysteine 525. Residue serine 187 is the Acyl-ester intermediate of the active site. Residue asparagine 233 is glycosylated (N-linked (GlcNAc...) asparagine). 5 residues coordinate Ca(2+): aspartate 256, aspartate 259, alanine 261, aspartate 263, and isoleucine 265. Active-site charge relay system residues include aspartate 400 and histidine 440. Asparagine 516 carries N-linked (GlcNAc...) asparagine glycosylation.

This sequence belongs to the tannase family.

The protein localises to the secreted. It catalyses the reaction feruloyl-polysaccharide + H2O = ferulate + polysaccharide.. Involved in degradation of plant cell walls. Hydrolyzes the feruloyl-arabinose ester bond in arabinoxylans as well as the feruloyl-galactose and feruloyl-arabinose ester bonds in pectin. The sequence is that of Probable feruloyl esterase B-2 (faeB-2) from Aspergillus fumigatus (strain ATCC MYA-4609 / CBS 101355 / FGSC A1100 / Af293) (Neosartorya fumigata).